We begin with the raw amino-acid sequence, 321 residues long: Phospho-N-acetylmuramoyl-pentapeptide-transferase (321 aa).

The next 9 membrane-spanning stretches (helical) occupy residues 1–21 (MSLL…FALM), 53–73 (TMGG…VGGW), 77–97 (LQPT…LGFW), 110–130 (GLKA…LTLV), 145–165 (LGVW…LVGF), 174–194 (GLDG…AVIA), 200–220 (YNVM…FVYN), 226–248 (IFMG…ILLH), and 301–321 (IDIV…ATII).

Belongs to the glycosyltransferase 4 family. MraY subfamily. The cofactor is Mg(2+).

It localises to the cell membrane. It carries out the reaction UDP-N-acetyl-alpha-D-muramoyl-L-alanyl-gamma-D-glutamyl-L-lysyl-D-alanyl-D-alanine + di-trans,octa-cis-undecaprenyl phosphate = Mur2Ac(oyl-L-Ala-gamma-D-Glu-L-Lys-D-Ala-D-Ala)-di-trans,octa-cis-undecaprenyl diphosphate + UMP. It participates in cell wall biogenesis; peptidoglycan biosynthesis. Functionally, catalyzes the initial step of the lipid cycle reactions in the biosynthesis of the cell wall peptidoglycan: transfers peptidoglycan precursor phospho-MurNAc-pentapeptide from UDP-MurNAc-pentapeptide onto the lipid carrier undecaprenyl phosphate, yielding undecaprenyl-pyrophosphoryl-MurNAc-pentapeptide, known as lipid I. The polypeptide is Phospho-N-acetylmuramoyl-pentapeptide-transferase (Lactiplantibacillus plantarum (strain ATCC BAA-793 / NCIMB 8826 / WCFS1) (Lactobacillus plantarum)).